Consider the following 262-residue polypeptide: Ribosomal RNA small subunit methyltransferase A (262 aa).

6 residues coordinate S-adenosyl-L-methionine: His13, Leu15, Gly40, Glu61, Asp85, and Asn103.

It belongs to the class I-like SAM-binding methyltransferase superfamily. rRNA adenine N(6)-methyltransferase family. RsmA subfamily.

Its subcellular location is the cytoplasm. The enzyme catalyses adenosine(1518)/adenosine(1519) in 16S rRNA + 4 S-adenosyl-L-methionine = N(6)-dimethyladenosine(1518)/N(6)-dimethyladenosine(1519) in 16S rRNA + 4 S-adenosyl-L-homocysteine + 4 H(+). In terms of biological role, specifically dimethylates two adjacent adenosines (A1518 and A1519) in the loop of a conserved hairpin near the 3'-end of 16S rRNA in the 30S particle. May play a critical role in biogenesis of 30S subunits. The chain is Ribosomal RNA small subunit methyltransferase A from Bordetella avium (strain 197N).